The sequence spans 240 residues: Splicing factor U2AF 35 kDa subunit (240 aa).

Ala2 is modified (N-acetylalanine). The segment at 12 to 40 (EKDKVNCSFYFKIGACRHGDRCSRLHNKP) adopts a C3H1-type 1 zinc-finger fold. Lys39 carries the N6-methyllysine modification. 2 positions are modified to phosphoserine: Ser61 and Ser145. In terms of domain architecture, RRM spans 65–147 (LRCAVSDVEM…QPIHAELSPV (83 aa)). The C3H1-type 2 zinc finger occupies 149–176 (DFREACCRQYEMGECTRGGFCNFMHLKP). Residue Arg165 is modified to Omega-N-methylarginine. Residues 183-240 (RELYGRRRKKHRSRSRSRERRSRSRDRGRGGGGGGGGGGGGRERDRRRSRDRERSGRF) form a disordered region. The span at 188-208 (RRRKKHRSRSRSRERRSRSRD) shows a compositional bias: basic residues. A compositionally biased stretch (gly residues) spans 212–222 (GGGGGGGGGGG). Basic and acidic residues predominate over residues 223–240 (GRERDRRRSRDRERSGRF).

The protein belongs to the splicing factor SR family. In terms of assembly, identified in the spliceosome C complex. Heterodimer with U2AF2. Interacts (via RS domain) with PHF5A (via N-terminus). Interacts with ZRANB2. Interacts with SDE2. Interacts with SF3B1.

The protein resides in the nucleus. It localises to the nucleus speckle. In terms of biological role, plays a critical role in both constitutive and enhancer-dependent splicing by mediating protein-protein interactions and protein-RNA interactions required for accurate 3'-splice site selection. Recruits U2 snRNP to the branch point. Directly mediates interactions between U2AF2 and proteins bound to the enhancers and thus may function as a bridge between U2AF2 and the enhancer complex to recruit it to the adjacent intron. This chain is Splicing factor U2AF 35 kDa subunit (U2AF1), found in Homo sapiens (Human).